The following is a 37-amino-acid chain: MKVKSSVRKICENCKVIRRSGKVIVICSNPKHKQRQG.

It belongs to the bacterial ribosomal protein bL36 family.

The protein localises to the plastid. Its subcellular location is the chloroplast. The sequence is that of Large ribosomal subunit protein bL36c from Bigelowiella natans (Pedinomonas minutissima).